The sequence spans 155 residues: SsrA-binding protein (155 aa).

Belongs to the SmpB family.

The protein resides in the cytoplasm. In terms of biological role, required for rescue of stalled ribosomes mediated by trans-translation. Binds to transfer-messenger RNA (tmRNA), required for stable association of tmRNA with ribosomes. tmRNA and SmpB together mimic tRNA shape, replacing the anticodon stem-loop with SmpB. tmRNA is encoded by the ssrA gene; the 2 termini fold to resemble tRNA(Ala) and it encodes a 'tag peptide', a short internal open reading frame. During trans-translation Ala-aminoacylated tmRNA acts like a tRNA, entering the A-site of stalled ribosomes, displacing the stalled mRNA. The ribosome then switches to translate the ORF on the tmRNA; the nascent peptide is terminated with the 'tag peptide' encoded by the tmRNA and targeted for degradation. The ribosome is freed to recommence translation, which seems to be the essential function of trans-translation. In Streptococcus suis (strain 98HAH33), this protein is SsrA-binding protein.